Reading from the N-terminus, the 197-residue chain is ADP-ribosylation factor-like protein 6-interacting protein 1 (197 aa).

The next 4 membrane-spanning stretches (helical) occupy residues 43–63, 64–84, 129–149, and 150–170; these read VVFG…LSLI, TLLS…PMVS, TVFV…GAII, and NNLL…GLQN.

The protein belongs to the ARL6ip family.

It localises to the membrane. This Drosophila melanogaster (Fruit fly) protein is ADP-ribosylation factor-like protein 6-interacting protein 1.